The chain runs to 184 residues: Bifunctional protein PyrR (184 aa).

The PRPP-binding motif lies at 105–117 (VVMVDDVLFTGRT).

This sequence belongs to the purine/pyrimidine phosphoribosyltransferase family. PyrR subfamily.

It catalyses the reaction UMP + diphosphate = 5-phospho-alpha-D-ribose 1-diphosphate + uracil. Functionally, regulates the transcription of the pyrimidine nucleotide (pyr) operon in response to exogenous pyrimidines. Also displays a weak uracil phosphoribosyltransferase activity which is not physiologically significant. This Rubrobacter xylanophilus (strain DSM 9941 / JCM 11954 / NBRC 16129 / PRD-1) protein is Bifunctional protein PyrR.